A 257-amino-acid chain; its full sequence is 3-methyl-2-oxobutanoate hydroxymethyltransferase (257 aa).

Residues D42 and D86 each contribute to the Mg(2+) site. 3-methyl-2-oxobutanoate contacts are provided by residues D42 to S43, D86, and K116. E118 is a Mg(2+) binding site. E185 (proton acceptor) is an active-site residue.

It belongs to the PanB family. As to quaternary structure, homodecamer; pentamer of dimers. It depends on Mg(2+) as a cofactor.

It localises to the cytoplasm. It catalyses the reaction 3-methyl-2-oxobutanoate + (6R)-5,10-methylene-5,6,7,8-tetrahydrofolate + H2O = 2-dehydropantoate + (6S)-5,6,7,8-tetrahydrofolate. It participates in cofactor biosynthesis; (R)-pantothenate biosynthesis; (R)-pantoate from 3-methyl-2-oxobutanoate: step 1/2. Catalyzes the reversible reaction in which hydroxymethyl group from 5,10-methylenetetrahydrofolate is transferred onto alpha-ketoisovalerate to form ketopantoate. The protein is 3-methyl-2-oxobutanoate hydroxymethyltransferase of Prochlorococcus marinus (strain AS9601).